The chain runs to 364 residues: D-alanine--D-alanine ligase (364 aa).

The region spanning 134 to 347 (RRLACINGLK…YPDLLDELIN (214 aa)) is the ATP-grasp domain. Position 167–222 (167–222 (ASEFGWPLFVKPCSLGSSVGIHKANNMDELNAAVADALRYDEEILVEEFIVGREIE)) interacts with ATP. Mg(2+)-binding residues include Asp-300, Glu-314, and Asn-316.

It belongs to the D-alanine--D-alanine ligase family. It depends on Mg(2+) as a cofactor. Mn(2+) serves as cofactor.

The protein localises to the cytoplasm. The catalysed reaction is 2 D-alanine + ATP = D-alanyl-D-alanine + ADP + phosphate + H(+). Its pathway is cell wall biogenesis; peptidoglycan biosynthesis. Functionally, cell wall formation. This Legionella pneumophila (strain Paris) protein is D-alanine--D-alanine ligase.